The primary structure comprises 156 residues: Crossover junction endodeoxyribonuclease RuvC (156 aa).

Catalysis depends on residues Asp-7, Glu-66, and Asp-138. Asp-7, Glu-66, and Asp-138 together coordinate Mg(2+).

It belongs to the RuvC family. As to quaternary structure, homodimer which binds Holliday junction (HJ) DNA. The HJ becomes 2-fold symmetrical on binding to RuvC with unstacked arms; it has a different conformation from HJ DNA in complex with RuvA. In the full resolvosome a probable DNA-RuvA(4)-RuvB(12)-RuvC(2) complex forms which resolves the HJ. Mg(2+) serves as cofactor.

It localises to the cytoplasm. The catalysed reaction is Endonucleolytic cleavage at a junction such as a reciprocal single-stranded crossover between two homologous DNA duplexes (Holliday junction).. Its function is as follows. The RuvA-RuvB-RuvC complex processes Holliday junction (HJ) DNA during genetic recombination and DNA repair. Endonuclease that resolves HJ intermediates. Cleaves cruciform DNA by making single-stranded nicks across the HJ at symmetrical positions within the homologous arms, yielding a 5'-phosphate and a 3'-hydroxyl group; requires a central core of homology in the junction. The consensus cleavage sequence is 5'-(A/T)TT(C/G)-3'. Cleavage occurs on the 3'-side of the TT dinucleotide at the point of strand exchange. HJ branch migration catalyzed by RuvA-RuvB allows RuvC to scan DNA until it finds its consensus sequence, where it cleaves and resolves the cruciform DNA. The chain is Crossover junction endodeoxyribonuclease RuvC from Ehrlichia chaffeensis (strain ATCC CRL-10679 / Arkansas).